Consider the following 395-residue polypeptide: MLLSRNLRALAAIHLWIVYLLLEDLLGTCAEGDNQRLVASAPYQDIEITLEKPRVQAVAEPHTLRYDLMALSLEVPGLPQFLTLRYFDDEPFLPYKKNSSITDSQEPRIKDHLRAETWGRETDDLQEEEEQLKGMLAEITAQNGQNTDLHILQATFGCELQRNGSTRGFWKLGYDGQNFLTFDQKTLTWTVDGPSTQKNKTFWKTRAPRADLVKTFLDDICPAQLQRYLASLRNGLLNTGFPKVIVTFRNYPVGRITLTCRAFRLYTRVATLTWLQYRKPVQQKTFGSETILPSGDGTYQAWVSIRVLPGQESQFSCNLKHGNHNINEPAATEAPVYGARREQPPTSGVGSRVGKSLWSAMTTALVVISWTLSQKLMGPLLWFCSGGFCSFLQCW.

The signal sequence occupies residues 1 to 32; the sequence is MLLSRNLRALAAIHLWIVYLLLEDLLGTCAEG. An alpha-1 region spans residues 57–148; that stretch reads AVAEPHTLRY…ITAQNGQNTD (92 aa). N-linked (GlcNAc...) asparagine glycosylation is found at Asn98, Asn163, and Asn199. Positions 149–240 are alpha-2; sequence LHILQATFGC…SLRNGLLNTG (92 aa). 2 disulfides stabilise this stretch: Cys158–Cys221 and Cys260–Cys317. Residues 241–337 form an alpha-3 region; sequence FPKVIVTFRN…EPAATEAPVY (97 aa). Residues 242 to 333 form the Ig-like C1-type domain; it reads PKVIVTFRNY…HNINEPAATE (92 aa). The segment at 332 to 352 is disordered; that stretch reads TEAPVYGARREQPPTSGVGSR. The interval 338 to 368 is connecting peptide; the sequence is GARREQPPTSGVGSRVGKSLWSAMTTALVVI. Residue Ser369 is the site of GPI-anchor amidated serine attachment. The propeptide at 370–395 is removed in mature form; it reads WTLSQKLMGPLLWFCSGGFCSFLQCW.

It belongs to the MHC class I family. In terms of assembly, heterodimer with B2M. Post-translationally, N-glycosylated. As to expression, expressed in stomach, intestine, uterus, skeletal muscle and heart.

It is found in the cell membrane. This is MHC class I-like protein MILL1 from Mus musculus (Mouse).